The sequence spans 150 residues: Transcription antitermination protein NusB (150 aa).

It belongs to the NusB family.

Functionally, involved in transcription antitermination. Required for transcription of ribosomal RNA (rRNA) genes. Binds specifically to the boxA antiterminator sequence of the ribosomal RNA (rrn) operons. In Streptococcus pyogenes serotype M6 (strain ATCC BAA-946 / MGAS10394), this protein is Transcription antitermination protein NusB.